Here is a 131-residue protein sequence, read N- to C-terminus: Protein FAM107B (131 aa).

Ala-2 carries the post-translational modification N-acetylalanine. Disordered stretches follow at residues 39-78 (MNQK…KKKS) and 100-131 (KLQE…AQES). Lys-50 is modified (N6-acetyllysine). Over residues 52–78 (ELQKVMEKRKRDQVIKQKEEEAQKKKS) the composition is skewed to basic and acidic residues. Residues 61 to 112 (KRDQVIKQKEEEAQKKKSDLEIELLKRQQKLEQLELEKQKLQEEQENAPEFV) adopt a coiled-coil conformation.

Belongs to the FAM107 family.

The chain is Protein FAM107B from Homo sapiens (Human).